Consider the following 180-residue polypeptide: MFPMLTGFISYGQQTIRAARYIGQGLIITLSHTNRLPITIHYPYEKSITSERFRGRIHFEFDKCIACEVCVRVCPIDLPLVDWKFEKDIKRKQLLNYSIDFGVCIFCGNCVEYCPTNCLSMTEEYELSTYDRHELNYNQIALSRLPISIMGDYTIQTIRNSPQSKIDEEKSWNSRTITDY.

4Fe-4S ferredoxin-type domains are found at residues 55–84 (GRIH…VDWK) and 95–124 (LNYS…MTEE). [4Fe-4S] cluster-binding residues include cysteine 64, cysteine 67, cysteine 70, cysteine 74, cysteine 104, cysteine 107, cysteine 110, and cysteine 114.

This sequence belongs to the complex I 23 kDa subunit family. NDH is composed of at least 16 different subunits, 5 of which are encoded in the nucleus. The cofactor is [4Fe-4S] cluster.

It localises to the plastid. The protein localises to the chloroplast thylakoid membrane. It catalyses the reaction a plastoquinone + NADH + (n+1) H(+)(in) = a plastoquinol + NAD(+) + n H(+)(out). It carries out the reaction a plastoquinone + NADPH + (n+1) H(+)(in) = a plastoquinol + NADP(+) + n H(+)(out). In terms of biological role, NDH shuttles electrons from NAD(P)H:plastoquinone, via FMN and iron-sulfur (Fe-S) centers, to quinones in the photosynthetic chain and possibly in a chloroplast respiratory chain. The immediate electron acceptor for the enzyme in this species is believed to be plastoquinone. Couples the redox reaction to proton translocation, and thus conserves the redox energy in a proton gradient. In Sorghum bicolor (Sorghum), this protein is NAD(P)H-quinone oxidoreductase subunit I, chloroplastic.